The primary structure comprises 115 residues: Meiotically up-regulated gene 106 protein (115 aa).

The N-terminal stretch at 1–34 (MSIKVEWIKFTRLKKCATLLVQLSLLRYRYMVLA) is a signal peptide. The next 2 membrane-spanning stretches (helical) occupy residues 41 to 60 (CIVVTIYCGCLFWFSNGALF) and 81 to 103 (GVKLKIFLFTILLAFETNTFTPY).

It localises to the membrane. Functionally, has a role in meiosis. The sequence is that of Meiotically up-regulated gene 106 protein (mug106) from Schizosaccharomyces pombe (strain 972 / ATCC 24843) (Fission yeast).